We begin with the raw amino-acid sequence, 1242 residues long: DNA-directed RNA polymerase RPB2 homolog (1242 aa).

The C4-type zinc-finger motif lies at Cys1180–Cys1201.

The protein belongs to the RNA polymerase beta chain family. As to quaternary structure, part of the viral DNA-directed RNA polymerase that consists of 8 polII-like subunits (RPB1, RPB2, RPB3, RPB5, RPB6, RPB7, RPB9, RPB10), a capping enzyme and a termination factor.

It localises to the host cytoplasm. The protein resides in the virion. The catalysed reaction is RNA(n) + a ribonucleoside 5'-triphosphate = RNA(n+1) + diphosphate. Its function is as follows. Catalytic component of the DNA-directed RNA polymerase (RNAP) that catalyzes the transcription in the cytoplasm of viral DNA into RNA using the four ribonucleoside triphosphates as substrates. Forms the polymerase active center together with RPB1. Part of the core element with the central large cleft, the clamp element that moves to open and close the cleft and the jaws that are thought to grab the incoming DNA template. In African swine fever virus (isolate Pig/Kenya/KEN-50/1950) (ASFV), this protein is DNA-directed RNA polymerase RPB2 homolog.